Reading from the N-terminus, the 66-residue chain is MSYARGEKIDGVIFLVEETDDGYTARALGHSIFTQAGSLEELKEMVKDAVECHFEEGERPKLSDFT.

It belongs to the UPF0150 family.

This Archaeoglobus fulgidus (strain ATCC 49558 / DSM 4304 / JCM 9628 / NBRC 100126 / VC-16) protein is UPF0150 protein AF_0072.1.